The primary structure comprises 131 residues: Small ribosomal subunit protein uS8 (131 aa).

The protein belongs to the universal ribosomal protein uS8 family. In terms of assembly, part of the 30S ribosomal subunit. Contacts proteins S5 and S12.

One of the primary rRNA binding proteins, it binds directly to 16S rRNA central domain where it helps coordinate assembly of the platform of the 30S subunit. The polypeptide is Small ribosomal subunit protein uS8 (Desulforudis audaxviator (strain MP104C)).